A 1036-amino-acid polypeptide reads, in one-letter code: UDP-N-acetylglucosamine--peptide N-acetylglucosaminyltransferase 110 kDa subunit (1036 aa).

Ala-2 bears the N-acetylalanine mark. 2 positions are modified to phosphoserine; by GSK3-beta; alternate: Ser-3 and Ser-4. O-linked (GlcNAc) serine; alternate glycans are attached at residues Ser-3 and Ser-4. TPR repeat units follow at residues 11 to 44 (STGLAELAHREYQAGDFEAAERHCMQLWRQEPDN), 79 to 112 (AEAYSNLGNVYKERGQLQEAIEHYRHALRLKPDF), 113 to 146 (IDGYINLAAALVAAGDMEGAVQAYVSALQYNPDL), 147 to 180 (YCVRSDLGNLLKALGRLEEAKACYLKAIETQPNF), 181 to 214 (AVAWSNLGCVFNAQGEIWLAIHHFEKAVTLDPNF), 215 to 248 (LDAYINLGNVLKEARIFDRAVAAYLRALSLSPNH), 249 to 282 (AVVHGNLACVYYEQGLIDLAIDTYRRAIELQPHF), 283 to 316 (PDAYCNLANALKEKGSVAEAEDCYNTALRLCPTH), 317 to 350 (ADSLNNLANIKREQGNIEEAVRLYRKALEVFPEF), 351 to 384 (AAAHSNLASVLQQQGKLQEALMHYKEAIRISPTF), 385 to 418 (ADAYSNMGNTLKEMQDVQGALQCYTRAIQINPAF), and 419 to 452 (ADAHSNLASIHKDSGNIPEAIASYRTALKLKPDF). An O-linked (GlcNAc) serine; by autocatalysis glycan is attached at Ser-389. Thr-444 carries the phosphothreonine modification. A TPR 13; truncated repeat occupies 453-463 (PDAYCNLAHCL). The short motif at 454–456 (DAY) is the DFP motif element. The Nuclear localization signal signature appears at 478-493 (KLVSIVAEQLEKNRLP). His-498 functions as the Proton acceptor in the catalytic mechanism. Residues Gln-839, Lys-842, 896-898 (APK), 901-904 (HVRR), 920-922 (HTT), and Asp-925 each bind UDP. Tyr-979 carries the phosphotyrosine modification. Positions 981 to 1000 (KKIRGKVWKQRISSPLFNTK) are required for phosphatidylinositol 3,4,5-triphosphate binding.

Belongs to the glycosyltransferase 41 family. O-GlcNAc transferase subfamily. As to quaternary structure, monomer; may exist in different oligomerization states in cells. Homotrimer, oligomerizes via TPR repeats 6 and 7. Trimerization is not necessary for activity in vitro, however it increases affinity for UDP-GlcNAc. A heterotrimer consisting of two 110 kDa subunits and one highly related 78 kDa subunit is isolated from liver. Component of a THAP1/THAP3-HCFC1-OGT complex. Component of the NSL complex at least composed of MOF/KAT8, KANSL1, KANSL2, KANSL3, MCRS1, PHF20, OGT1/OGT, WDR5 and HCFC1. Found in a complex with KIF5B, RHOT1, RHOT2 and TRAK1. Found in a complex composed of at least SINHCAF, SIN3A, HDAC1, SAP30, RBBP4, OGT and TET1. Component of a complex composed of KMT2E/MLL5, OGT and USP7; the complex stabilizes KMT2E/MLL5, preventing KMT2E/MLL5 ubiquitination and proteasomal-mediated degradation. Interacts (via TPRs 1-6) with SIN3A; the interaction mediates transcriptional repression in parallel with histone deacetylase. Interacts (via TPR 5-6) with TET1, TET2 and TET3. Interacts (via TPR repeats 6 and 7) with ATXN10. Interacts with NSD2. Interacts with PROSER1; this interaction mediates TET2 O-GlcNAcylation and stability by promoting the interaction between OGT and TET2. In terms of processing, several different immunologically-related forms of this protein are found in different tissues (with apparent molecular weights of 110, 80 and 78 kDa); they are probably the result of alternative splicing and/or proteolysis. Post-translationally, O-glycosylated; contains O-GlcNAc. Both p110 and p78 forms are O-glycosylated. Ubiquitinated by the SCF(FBXO31) complex, leading to its proteasomal degradation. In terms of processing, phosphorylation on Ser-3 or Ser-4 by GSK3-beta positively regulates its activity. Phosphorylation at Thr-444 by AMPK promotes nuclear localization. Post-translationally, glycosylated via autocatalysis; O-GlcNAcylation at Ser-389 promotes nuclear localization. Expressed in brain, heart, liver, thymus, muscle, lung, spleen, uterus and ovary; in the kidney only an immunologically-related 78 kDa band is present, which is also present in liver and muscle. In the pancreas, expressed in both exocrine acinar cells and in endocrine cells of the islets of Langerhans.

It localises to the cytoplasm. The protein localises to the nucleus. Its subcellular location is the cell membrane. It is found in the mitochondrion membrane. The protein resides in the cell projection. It carries out the reaction L-seryl-[protein] + UDP-N-acetyl-alpha-D-glucosamine = 3-O-(N-acetyl-beta-D-glucosaminyl)-L-seryl-[protein] + UDP + H(+). The catalysed reaction is L-threonyl-[protein] + UDP-N-acetyl-alpha-D-glucosamine = 3-O-(N-acetyl-beta-D-glucosaminyl)-L-threonyl-[protein] + UDP + H(+). It functions in the pathway protein modification; protein glycosylation. Its activity is regulated as follows. Inhibited by UDP, UTP and UDP-GlcNAc; 50 mM NaCl or KCl inhibit activity about 70%. In terms of biological role, catalyzes the transfer of a single N-acetylglucosamine from UDP-GlcNAc to a serine or threonine residue in cytoplasmic and nuclear proteins resulting in their modification with a beta-linked N-acetylglucosamine (O-GlcNAc). Glycosylates a large and diverse number of proteins including histone H2B, AKT1, AMPK, ATG4B, CAPRIN1, EZH2, FNIP1, GSDMD, KRT7, LMNA, LMNB1, LMNB2, RPTOR, HOXA1, PFKL, KMT2E/MLL5, MAPT/TAU, TET2, RBL2, RET, NOD2 and HCFC1. Can regulate their cellular processes via cross-talk between glycosylation and phosphorylation or by affecting proteolytic processing. Involved in insulin resistance in muscle and adipocyte cells via glycosylating insulin signaling components and inhibiting the 'Thr-308' phosphorylation of AKT1, enhancing IRS1 phosphorylation and attenuating insulin signaling. Involved in glycolysis regulation by mediating glycosylation of 6-phosphofructokinase PFKL, inhibiting its activity. Plays a key role in chromatin structure by mediating O-GlcNAcylation of 'Ser-112' of histone H2B: recruited to CpG-rich transcription start sites of active genes via its interaction with TET proteins (TET1, TET2 or TET3). As part of the NSL complex indirectly involved in acetylation of nucleosomal histone H4 on several lysine residues. O-GlcNAcylation of 'Ser-75' of EZH2 increases its stability, and facilitating the formation of H3K27me3 by the PRC2/EED-EZH2 complex. Stabilizes KMT2E/MLL5 by mediating its glycosylation, thereby preventing KMT2E/MLL5 ubiquitination. Regulates circadian oscillation of the clock genes and glucose homeostasis in the liver. Stabilizes clock proteins BMAL1 and CLOCK through O-glycosylation, which prevents their ubiquitination and subsequent degradation. Promotes the CLOCK-BMAL1-mediated transcription of genes in the negative loop of the circadian clock such as PER1/2 and CRY1/2. O-glycosylates HCFC1 and regulates its proteolytic processing and transcriptional activity. Component of a THAP1/THAP3-HCFC1-OGT complex that is required for the regulation of the transcriptional activity of RRM1. Regulates mitochondrial motility in neurons by mediating glycosylation of TRAK1. Promotes autophagy by mediating O-glycosylation of ATG4B. Acts as a regulator of mTORC1 signaling by mediating O-glycosylation of RPTOR and FNIP1: O-GlcNAcylation of RPTOR in response to glucose sufficiency promotes activation of the mTORC1 complex. This Rattus norvegicus (Rat) protein is UDP-N-acetylglucosamine--peptide N-acetylglucosaminyltransferase 110 kDa subunit (Ogt).